A 775-amino-acid polypeptide reads, in one-letter code: Rab3 GTPase-activating protein catalytic subunit (775 aa).

5 positions are modified to phosphoserine: Ser173, Ser330, Ser373, Ser375, and Ser384. Positions 324–351 (DEGKKTSPSDSMTKAYPADAGKAGGQLG) are disordered. The disordered stretch occupies residues 386–414 (AEDLRGNGQESTKKGGPKDMAPLKPEGRL). Ser458 carries the post-translational modification Phosphoserine.

It belongs to the Rab3-GAP catalytic subunit family. As to quaternary structure, the Rab3 GTPase-activating complex is a heterodimer composed of Rab3gap1 and Rab3gap2. The Rab3 GTPase-activating complex interacts with DMXL2. Interacts with LMAN1.

It localises to the cytoplasm. The protein localises to the endoplasmic reticulum. Its subcellular location is the golgi apparatus. It is found in the cis-Golgi network. In terms of biological role, catalytic subunit of the Rab3 GTPase-activating (Rab3GAP) complex composed of RAB3GAP1 and RAB3GAP2, which has GTPase-activating protein (GAP) activity towards various Rab3 subfamily members (RAB3A, RAB3B, RAB3C and RAB3D), RAB5A and RAB43, and guanine nucleotide exchange factor (GEF) activity towards RAB18. As part of the Rab3GAP complex, acts as a GAP for Rab3 proteins by converting active RAB3-GTP to the inactive form RAB3-GDP. Rab3 proteins are involved in regulated exocytosis of neurotransmitters and hormones. The Rab3GAP complex, acts as a GEF for RAB18 by promoting the conversion of inactive RAB18-GDP to the active form RAB18-GTP. Recruits and stabilizes RAB18 at the cis-Golgi membrane where RAB18 is most likely activated. Also involved in RAB18 recruitment at the endoplasmic reticulum (ER) membrane where it maintains proper ER structure. Required for normal eye and brain development. May participate in neurodevelopmental processes such as proliferation, migration and differentiation before synapse formation, and non-synaptic vesicular release of neurotransmitters. The polypeptide is Rab3 GTPase-activating protein catalytic subunit (Rattus norvegicus (Rat)).